The following is a 747-amino-acid chain: Cyclic di-GMP phosphodiesterase PdeF (747 aa).

At 1–14 the chain is on the periplasmic side; the sequence is MKLNATYIKIRDKW. A helical transmembrane segment spans residues 15–36; the sequence is WGLPLFLPSLILPIFAHINTFA. Over 37–42 the chain is Cytoplasmic; the sequence is HISSGE. The chain crosses the membrane as a helical span at residues 43-65; that stretch reads VFLFYLPLALMISMMMFFSWAAL. Residues 66–79 are Periplasmic-facing; sequence PGIALGIFVRKYAE. A helical membrane pass occupies residues 80–102; it reads LGFYETLSLTANFIIIIILCWGG. Over 103–128 the chain is Cytoplasmic; that stretch reads YRVFTPRRNNVSHGDTRLISQRIFWQ. The helical transmembrane segment at 129–151 threads the bilayer; sequence IVFPATLFLILFQFAAFVGLLAS. Topologically, residues 152–165 are periplasmic; sequence RENLVGVMPFNLGT. Residues 166–188 traverse the membrane as a helical segment; sequence LINYQALLVGNLIGVPLCYFIIR. The Cytoplasmic portion of the chain corresponds to 189–215; that stretch reads VVRNPFYLRSYYSQLKQQVDAKVTKKE. Residues 216 to 235 traverse the membrane as a helical segment; the sequence is FALWLLALGALLLLLCMPLN. Over 236-239 the chain is Periplasmic; sequence EKST. Residues 240–259 form a helical membrane-spanning segment; that stretch reads IFSTNYTLSLLLPLMMWGAM. Over 260–265 the chain is Cytoplasmic; the sequence is RYGYKL. Residues 266-285 form a helical membrane-spanning segment; sequence ISLLWAVVLMISIHSYQNYI. The Periplasmic segment spans residues 286–294; it reads PIYPGYTTQ. Residues 295-317 traverse the membrane as a helical segment; the sequence is LTITSSSYLVFSFIVNYMAVLAT. The Cytoplasmic portion of the chain corresponds to 318–747; sequence RQRAVVRRIQ…NEIEPIRESA (430 aa). An EAL domain is found at 493–744; the sequence is KVAMMNRLQQ…DTLNEIEPIR (252 aa).

Requires Mg(2+) as cofactor. The cofactor is Mn(2+).

The protein localises to the cell inner membrane. It catalyses the reaction 3',3'-c-di-GMP + H2O = 5'-phosphoguanylyl(3'-&gt;5')guanosine + H(+). Its activity is regulated as follows. Inhibited by pGpG. Its function is as follows. Phosphodiesterase (PDE) that catalyzes the hydrolysis of cyclic-di-GMP (c-di-GMP) to 5'-pGpG. Truncated proteins consisting of the GGDEF/EAL domains (residues 319-747) or of the EAL domain alone (481-747) have c-di-GMP phosphodiesterase activity. They do not have diguanylate cyclase activity. Cyclic-di-GMP is a second messenger which controls cell surface-associated traits in bacteria. The protein is Cyclic di-GMP phosphodiesterase PdeF of Escherichia coli (strain K12).